A 272-amino-acid polypeptide reads, in one-letter code: Glycosylphosphatidylinositol anchor biosynthesis protein 11 (272 aa).

A compositionally biased stretch (polar residues) spans 21–31; that stretch reads QSTSTTKSTPG. A disordered region spans residues 21 to 48; that stretch reads QSTSTTKSTPGSQATESSTTTAGSSSSL. The span at 32 to 48 shows a compositional bias: low complexity; it reads SQATESSTTTAGSSSSL. Transmembrane regions (helical) follow at residues 91–111, 145–165, 177–197, 215–235, and 248–268; these read VMLN…LLCL, LLAS…MVLF, FLCA…VHGV, TFGG…PIPL, and ILCG…TLFW.

This sequence belongs to the PIGF family.

Its subcellular location is the endoplasmic reticulum membrane. The protein operates within glycolipid biosynthesis; glycosylphosphatidylinositol-anchor biosynthesis. Its function is as follows. Acts in the GPI biosynthetic pathway between GlcNAc-PI synthesis and GPI transfer to protein. In Neurospora crassa (strain ATCC 24698 / 74-OR23-1A / CBS 708.71 / DSM 1257 / FGSC 987), this protein is Glycosylphosphatidylinositol anchor biosynthesis protein 11 (gpi-11).